A 196-amino-acid chain; its full sequence is Putative HTH-type transcriptional regulator in exeN 3'region (196 aa).

Residues 120–185 enclose the HTH luxR-type domain; the sequence is ASVGGDRLTR…ELFNLFLNHL (66 aa). Positions 144–163 form a DNA-binding region, H-T-H motif; that stretch reads TEAIAAALGIGNGTVKNHRK.

The polypeptide is Putative HTH-type transcriptional regulator in exeN 3'region (Aeromonas salmonicida).